We begin with the raw amino-acid sequence, 149 residues long: Calmodulin-2 (149 aa).

EF-hand domains follow at residues 8 to 43, 44 to 79, 81 to 116, and 117 to 149; these read DQISEFKEAFSLFDKDGDGCITTKELGTVMRSLGQN, PTEAELQDMINEVDADGNGTIDFPEFLNLMARKMKD, DSEEELKEAFRVFDKDQNGFISAAELRHVMTNLGEK, and LTDEEVDEMIKEADVDGDGQINYEEFVKVMMAK. 19 residues coordinate Ca(2+): aspartate 21, aspartate 23, aspartate 25, cysteine 27, glutamate 32, aspartate 57, aspartate 59, asparagine 61, threonine 63, glutamate 68, aspartate 94, aspartate 96, asparagine 98, glutamate 105, aspartate 130, aspartate 132, aspartate 134, glutamine 136, and glutamate 141.

Belongs to the calmodulin family. In terms of assembly, interacts with KCBP and CIP111. Binds to IQD1 and IQD20.

The protein localises to the cytoplasm. Its subcellular location is the cytoskeleton. In terms of biological role, calmodulin mediates the control of a large number of enzymes, ion channels and other proteins by Ca(2+). Among the enzymes to be stimulated by the calmodulin-Ca(2+) complex are a number of protein kinases and phosphatases. The chain is Calmodulin-2 (CAM2) from Arabidopsis thaliana (Mouse-ear cress).